A 695-amino-acid polypeptide reads, in one-letter code: UvrABC system protein C (695 aa).

Basic and acidic residues predominate over residues 1–10 (MNQDPAETRD). A disordered region spans residues 1-53 (MNQDPAETRDTAAPPPADTTSPSPVSPELEPRSAPGAQDIDAASASLTVDEDD). Residues 18 to 27 (DTTSPSPVSP) are compositionally biased toward low complexity. A GIY-YIG domain is found at 88-166 (TSPGVYRMLN…IKQLRPRFNV (79 aa)). In terms of domain architecture, UVR spans 276–311 (RAVKQELAVEMEKASNELEFETAALYRDRLAALSAI).

It belongs to the UvrC family. In terms of assembly, interacts with UvrB in an incision complex.

Its subcellular location is the cytoplasm. The UvrABC repair system catalyzes the recognition and processing of DNA lesions. UvrC both incises the 5' and 3' sides of the lesion. The N-terminal half is responsible for the 3' incision and the C-terminal half is responsible for the 5' incision. In Rhodopseudomonas palustris (strain BisB5), this protein is UvrABC system protein C.